The following is a 145-amino-acid chain: 5-hydroxymethyl-dUMP N-hydrolase (145 aa).

Positions 7, 9, 10, 11, 79, 81, 85, and 109 each coordinate 5-hydroxymethyl-dUMP.

The protein belongs to the 2'-deoxynucleoside 5'-phosphate N-hydrolase 1 family. In terms of assembly, monomer and homodimer.

It is found in the cytoplasm. Its subcellular location is the nucleus. The catalysed reaction is 5-hydroxymethyl-dUMP + H2O = 5-hydroxymethyluracil + 2-deoxy-D-ribose 5-phosphate. Functionally, part of a nucleotide salvage pathway that eliminates epigenetically modified 5-hydroxymethyl-dCMP (hmdCMP) in a two-step process entailing deamination to cytotoxic 5-hydroxymethyl-dUMP (hmdUMP), followed by its hydrolysis into 5-hydroxymethyluracil (hmU) and 2-deoxy-D-ribose 5-phosphate (deoxyribosephosphate). Catalyzes the second step in that pathway, the hydrolysis of the N-glycosidic bond in hmdUMP, degrading this cytotoxic nucleotide to avoid its genomic integration. This is 5-hydroxymethyl-dUMP N-hydrolase from Esox lucius (Northern pike).